Consider the following 457-residue polypeptide: ATP synthase subunit beta (457 aa).

147 to 154 contributes to the ATP binding site; sequence GGAGVGKT.

The protein belongs to the ATPase alpha/beta chains family. As to quaternary structure, F-type ATPases have 2 components, CF(1) - the catalytic core - and CF(0) - the membrane proton channel. CF(1) has five subunits: alpha(3), beta(3), gamma(1), delta(1), epsilon(1). CF(0) has three main subunits: a(1), b(2) and c(9-12). The alpha and beta chains form an alternating ring which encloses part of the gamma chain. CF(1) is attached to CF(0) by a central stalk formed by the gamma and epsilon chains, while a peripheral stalk is formed by the delta and b chains.

It localises to the cell inner membrane. It carries out the reaction ATP + H2O + 4 H(+)(in) = ADP + phosphate + 5 H(+)(out). Functionally, produces ATP from ADP in the presence of a proton gradient across the membrane. The catalytic sites are hosted primarily by the beta subunits. The chain is ATP synthase subunit beta from Glaesserella parasuis serovar 5 (strain SH0165) (Haemophilus parasuis).